The following is an 834-amino-acid chain: Translation factor GUF1 homolog, mitochondrial (834 aa).

The transit peptide at 1–66 (MKLCGVRSSG…RPLLAEPRRY (66 aa)) directs the protein to the mitochondrion. One can recognise a tr-type G domain in the interval 129–314 (ACIRNVSVVA…HIIDKVPPPC (186 aa)). GTP contacts are provided by residues 138-145 (AHVDHGKT), 205-209 (DTPGH), and 259-262 (TKMD). Disordered stretches follow at residues 363 to 385 (GAAS…ASGG) and 476 to 507 (TGSP…SSSV). Positions 488-507 (ATAAETASSDDASGSGSSSV) are enriched in low complexity.

Belongs to the TRAFAC class translation factor GTPase superfamily. Classic translation factor GTPase family. LepA subfamily.

It localises to the mitochondrion inner membrane. The catalysed reaction is GTP + H2O = GDP + phosphate + H(+). Promotes mitochondrial protein synthesis. May act as a fidelity factor of the translation reaction, by catalyzing a one-codon backward translocation of tRNAs on improperly translocated ribosomes. Binds to mitochondrial ribosomes in a GTP-dependent manner. The chain is Translation factor GUF1 homolog, mitochondrial from Leishmania infantum.